Reading from the N-terminus, the 2182-residue chain is Autophagy-related protein 2 (2182 aa).

Disordered stretches follow at residues 291–375, 392–426, 523–630, 663–682, 736–758, and 793–816; these read SPSL…PLAD, EQDY…ATPR, YTHE…STTL, DIDP…VATP, GAFS…SSVE, and DKKP…SKET. Composition is skewed to polar residues over residues 303 to 313 and 322 to 331; these read NPPSRQATELS and VSSSQASIRS. The span at 332-347 shows a compositional bias: basic and acidic residues; the sequence is NEPESASHHSLPENDH. Composition is skewed to acidic residues over residues 528 to 540 and 613 to 624; these read AENE…EQTT and WDDDYDDPEEEP. Positions 745-758 are enriched in polar residues; sequence HAQQRSSQGTSSVE. Basic and acidic residues predominate over residues 793–813; it reads DKKPSPAEGSKQDTASKDAPS.

It belongs to the ATG2 family. In terms of assembly, interacts with ATG18.

The protein localises to the preautophagosomal structure membrane. Its subcellular location is the endoplasmic reticulum membrane. It carries out the reaction a 1,2-diacyl-sn-glycero-3-phosphocholine(in) = a 1,2-diacyl-sn-glycero-3-phosphocholine(out). The catalysed reaction is a 1,2-diacyl-sn-glycero-3-phospho-L-serine(in) = a 1,2-diacyl-sn-glycero-3-phospho-L-serine(out). It catalyses the reaction a 1,2-diacyl-sn-glycero-3-phosphoethanolamine(in) = a 1,2-diacyl-sn-glycero-3-phosphoethanolamine(out). Functionally, lipid transfer protein required for autophagosome completion and peroxisome degradation and peroxisome degradation. Tethers the edge of the isolation membrane (IM) to the endoplasmic reticulum (ER) and mediates direct lipid transfer from ER to IM for IM expansion. ATG2 binds to the ER exit site (ERES), which is the membrane source for autophagosome formation, using basic residues in its N-terminal region (NR) and to the expanding edge of the IM through its C-terminal region. The latter binding is assisted by an ATG18-PtdIns3P interaction. ATG2 then extracts phospholipids from the membrane source using its NR and transfers them to ATG9 to the IM through its predicted beta-sheet-rich structure for membrane expansion. Autophagy is required for proper vegetative growth, asexual/sexual reproduction, and full virulence. Autophagy is particularly involved in the biosynthesis of deoxynivalenol (DON), an important virulence determinant. The protein is Autophagy-related protein 2 of Gibberella zeae (strain ATCC MYA-4620 / CBS 123657 / FGSC 9075 / NRRL 31084 / PH-1) (Wheat head blight fungus).